The following is a 617-amino-acid chain: Secretogranin-2 (617 aa).

The N-terminal stretch at 1–27 (MAEAKTHWLGAALSLIPLIFLISGAEA) is a signal peptide. Positions 28–30 (ASF) are excised as a propeptide. The tract at residues 123-147 (NEPQSVPKENKPHALNSEKNFPIDM) is disordered. Tyr-151 is subject to Sulfotyrosine. 6 positions are modified to phosphoserine: Ser-174, Ser-268, Ser-432, Ser-532, Ser-555, and Ser-556. The interval 552-583 (NQGSSQETDKLAPVSKRFPVGPPKNDDTPNRQ) is disordered.

It belongs to the chromogranin/secretogranin protein family. As to quaternary structure, interacts with Secretogranin III/SCG3.

It is found in the secreted. Neuroendocrine protein of the granin family that regulates the biogenesis of secretory granules. The sequence is that of Secretogranin-2 (SCG2) from Macaca fascicularis (Crab-eating macaque).